The chain runs to 182 residues: uncharacterized protein (182 aa).

The protein localises to the plastid. It localises to the cyanelle. This is an uncharacterized protein from Cyanophora paradoxa.